The following is a 396-amino-acid chain: 1-deoxy-D-xylulose 5-phosphate reductoisomerase (396 aa).

T17, G18, S19, I20, N47, and N130 together coordinate NADPH. A 1-deoxy-D-xylulose 5-phosphate-binding site is contributed by K131. E132 is a binding site for NADPH. A Mn(2+)-binding site is contributed by D156. The 1-deoxy-D-xylulose 5-phosphate site is built by S157, E158, S182, and H205. E158 contacts Mn(2+). Position 211 (G211) interacts with NADPH. The 1-deoxy-D-xylulose 5-phosphate site is built by S218, N223, K224, and E227. E227 serves as a coordination point for Mn(2+).

This sequence belongs to the DXR family. Mg(2+) serves as cofactor. The cofactor is Mn(2+).

It carries out the reaction 2-C-methyl-D-erythritol 4-phosphate + NADP(+) = 1-deoxy-D-xylulose 5-phosphate + NADPH + H(+). The protein operates within isoprenoid biosynthesis; isopentenyl diphosphate biosynthesis via DXP pathway; isopentenyl diphosphate from 1-deoxy-D-xylulose 5-phosphate: step 1/6. Catalyzes the NADPH-dependent rearrangement and reduction of 1-deoxy-D-xylulose-5-phosphate (DXP) to 2-C-methyl-D-erythritol 4-phosphate (MEP). The protein is 1-deoxy-D-xylulose 5-phosphate reductoisomerase of Rhizobium etli (strain CIAT 652).